Reading from the N-terminus, the 312-residue chain is DNA-directed RNA polymerase subunit alpha (312 aa).

Positions 1–226 (MIEFEKPRIE…EHLDIFVNLT (226 aa)) are alpha N-terminal domain (alpha-NTD). The segment at 243 to 312 (KEKMLEMTIE…DLGLGLRKDD (70 aa)) is alpha C-terminal domain (alpha-CTD).

The protein belongs to the RNA polymerase alpha chain family. In terms of assembly, homodimer. The RNAP catalytic core consists of 2 alpha, 1 beta, 1 beta' and 1 omega subunit. When a sigma factor is associated with the core the holoenzyme is formed, which can initiate transcription.

It catalyses the reaction RNA(n) + a ribonucleoside 5'-triphosphate = RNA(n+1) + diphosphate. In terms of biological role, DNA-dependent RNA polymerase catalyzes the transcription of DNA into RNA using the four ribonucleoside triphosphates as substrates. The polypeptide is DNA-directed RNA polymerase subunit alpha (Enterococcus faecalis (strain ATCC 700802 / V583)).